The sequence spans 206 residues: N-(5'-phosphoribosyl)anthranilate isomerase (206 aa).

The protein belongs to the TrpF family.

The catalysed reaction is N-(5-phospho-beta-D-ribosyl)anthranilate = 1-(2-carboxyphenylamino)-1-deoxy-D-ribulose 5-phosphate. It participates in amino-acid biosynthesis; L-tryptophan biosynthesis; L-tryptophan from chorismate: step 3/5. The protein is N-(5'-phosphoribosyl)anthranilate isomerase of Pseudomonas syringae pv. tomato (strain ATCC BAA-871 / DC3000).